The following is a 120-amino-acid chain: Large ribosomal subunit protein uL18 (120 aa).

The interval 1–22 (MITKTSKNAARQKRHARVRAKL) is disordered. Residues 10–20 (ARQKRHARVRA) show a composition bias toward basic residues.

The protein belongs to the universal ribosomal protein uL18 family. In terms of assembly, part of the 50S ribosomal subunit; part of the 5S rRNA/L5/L18/L25 subcomplex. Contacts the 5S and 23S rRNAs.

Functionally, this is one of the proteins that bind and probably mediate the attachment of the 5S RNA into the large ribosomal subunit, where it forms part of the central protuberance. The protein is Large ribosomal subunit protein uL18 of Bacillus velezensis (strain DSM 23117 / BGSC 10A6 / LMG 26770 / FZB42) (Bacillus amyloliquefaciens subsp. plantarum).